The primary structure comprises 565 residues: Galactoside 2-alpha-L-fucosyltransferase (565 aa).

Over 1-43 the chain is Cytoplasmic; sequence MNMLIKRVIAIKNPRGDDNNNNKLSDLETLTDKCTTCPLTLMR. A helical; Signal-anchor for type II membrane protein transmembrane segment spans residues 44–64; sequence VMAFFVVSFMLFSVLFSLSVV. At 65 to 565 the chain is on the lumenal side; it reads LRDPPSDAAI…MSWGLKLVDN (501 aa). Residues N159, N263, N407, and N509 are each glycosylated (N-linked (GlcNAc...) asparagine).

The protein belongs to the glycosyltransferase 37 family.

It localises to the golgi apparatus. Its subcellular location is the golgi stack membrane. It participates in protein modification; protein glycosylation. Involved in cell wall biosynthesis. Adds the terminal fucosyl residue on xyloglucan side chains. The sequence is that of Galactoside 2-alpha-L-fucosyltransferase (FT1) from Pisum sativum (Garden pea).